We begin with the raw amino-acid sequence, 183 residues long: Holliday junction branch migration complex subunit RuvA (183 aa).

The segment at 1 to 63 is domain I; sequence MIVGLIGVVE…EDAHLLYGFL (63 aa). Residues 64–141 form a domain II region; sequence EEGEKILFER…IQDETKPMHN (78 aa). Residue Asn-141 is a region of interest, flexible linker. The segment at 141-183 is domain III; the sequence is NEVFLALESLGFKSAEINKVLKTLKPSLSIEAAIKEALQQLRS.

The protein belongs to the RuvA family. As to quaternary structure, homotetramer. Forms an RuvA(8)-RuvB(12)-Holliday junction (HJ) complex. HJ DNA is sandwiched between 2 RuvA tetramers; dsDNA enters through RuvA and exits via RuvB. An RuvB hexamer assembles on each DNA strand where it exits the tetramer. Each RuvB hexamer is contacted by two RuvA subunits (via domain III) on 2 adjacent RuvB subunits; this complex drives branch migration. In the full resolvosome a probable DNA-RuvA(4)-RuvB(12)-RuvC(2) complex forms which resolves the HJ.

The protein resides in the cytoplasm. Its function is as follows. The RuvA-RuvB-RuvC complex processes Holliday junction (HJ) DNA during genetic recombination and DNA repair, while the RuvA-RuvB complex plays an important role in the rescue of blocked DNA replication forks via replication fork reversal (RFR). RuvA specifically binds to HJ cruciform DNA, conferring on it an open structure. The RuvB hexamer acts as an ATP-dependent pump, pulling dsDNA into and through the RuvAB complex. HJ branch migration allows RuvC to scan DNA until it finds its consensus sequence, where it cleaves and resolves the cruciform DNA. The polypeptide is Holliday junction branch migration complex subunit RuvA (Helicobacter pylori (strain G27)).